Reading from the N-terminus, the 557-residue chain is Dihydroxy-acid dehydratase (557 aa).

Asp78 is a Mg(2+) binding site. Cys119 contacts [2Fe-2S] cluster. 2 residues coordinate Mg(2+): Asp120 and Lys121. Lys121 carries the N6-carboxylysine modification. Cys191 provides a ligand contact to [2Fe-2S] cluster. Glu442 contributes to the Mg(2+) binding site. Ser468 (proton acceptor) is an active-site residue.

This sequence belongs to the IlvD/Edd family. As to quaternary structure, homodimer. [2Fe-2S] cluster is required as a cofactor. Mg(2+) serves as cofactor.

The enzyme catalyses (2R)-2,3-dihydroxy-3-methylbutanoate = 3-methyl-2-oxobutanoate + H2O. It catalyses the reaction (2R,3R)-2,3-dihydroxy-3-methylpentanoate = (S)-3-methyl-2-oxopentanoate + H2O. The protein operates within amino-acid biosynthesis; L-isoleucine biosynthesis; L-isoleucine from 2-oxobutanoate: step 3/4. It participates in amino-acid biosynthesis; L-valine biosynthesis; L-valine from pyruvate: step 3/4. Its function is as follows. Functions in the biosynthesis of branched-chain amino acids. Catalyzes the dehydration of (2R,3R)-2,3-dihydroxy-3-methylpentanoate (2,3-dihydroxy-3-methylvalerate) into 2-oxo-3-methylpentanoate (2-oxo-3-methylvalerate) and of (2R)-2,3-dihydroxy-3-methylbutanoate (2,3-dihydroxyisovalerate) into 2-oxo-3-methylbutanoate (2-oxoisovalerate), the penultimate precursor to L-isoleucine and L-valine, respectively. The protein is Dihydroxy-acid dehydratase of Lachnospira eligens (strain ATCC 27750 / DSM 3376 / VPI C15-48 / C15-B4) (Eubacterium eligens).